The following is a 683-amino-acid chain: Long-chain-fatty-acid--CoA ligase 5 (683 aa).

The helical; Signal-anchor for type III membrane protein transmembrane segment at leucine 12–isoleucine 32 threads the bilayer. Residues asparagine 33 to glutamate 683 lie on the Cytoplasmic side of the membrane. N6-acetyllysine is present on lysine 361.

Belongs to the ATP-dependent AMP-binding enzyme family.

The protein localises to the mitochondrion. It is found in the endoplasmic reticulum. The protein resides in the mitochondrion outer membrane. It localises to the endoplasmic reticulum membrane. Its subcellular location is the cell membrane. The enzyme catalyses a long-chain fatty acid + ATP + CoA = a long-chain fatty acyl-CoA + AMP + diphosphate. It carries out the reaction (5Z,8Z,11Z,14Z)-eicosatetraenoate + ATP + CoA = (5Z,8Z,11Z,14Z)-eicosatetraenoyl-CoA + AMP + diphosphate. It catalyses the reaction hexadecanoate + ATP + CoA = hexadecanoyl-CoA + AMP + diphosphate. The catalysed reaction is (E)-hexadec-2-enoate + ATP + CoA = (2E)-hexadecenoyl-CoA + AMP + diphosphate. The enzyme catalyses 15-hydroxy-(5Z,8Z,11Z,13E)-eicosatetraenoate + ATP + CoA = 15-hydroxy-(5Z,8Z,11Z,13E)-eicosatetraenoyl-CoA + AMP + diphosphate. It carries out the reaction 12-hydroxy-(5Z,8Z,10E,14Z)-eicosatetraenoate + ATP + CoA = 12-hydroxy-(5Z,8Z,10E,14Z)-eicosatetraenoyl-CoA + AMP + diphosphate. It catalyses the reaction 5-hydroxy-(6E,8Z,11Z,14Z)-eicosatetraenoate + ATP + CoA = 5-hydroxy-(6E,8Z,11Z,14Z)-eicosatetraenoyl-CoA + AMP + diphosphate. The catalysed reaction is 14,15-epoxy-(5Z,8Z,11Z)-eicosatrienoate + ATP + CoA = 14,15-epoxy-(5Z,8Z,11Z)-eicosatrienoyl-CoA + AMP + diphosphate. The enzyme catalyses 11,12-epoxy-(5Z,8Z,14Z)-eicosatrienoate + ATP + CoA = 11,12-epoxy-(5Z,8Z,14Z)-eicosatrienoyl-CoA + AMP + diphosphate. It carries out the reaction (9Z)-octadecenoate + ATP + CoA = (9Z)-octadecenoyl-CoA + AMP + diphosphate. Functionally, catalyzes the conversion of long-chain fatty acids to their active form acyl-CoAs for both synthesis of cellular lipids, and degradation via beta-oxidation. ACSL5 may activate fatty acids from exogenous sources for the synthesis of triacylglycerol destined for intracellular storage. It was suggested that it may also stimulate fatty acid oxidation. At the villus tip of the crypt-villus axis of the small intestine may sensitize epithelial cells to apoptosis specifically triggered by the death ligand TRAIL. May have a role in the survival of glioma cells. Utilizes a wide range of saturated fatty acids with a preference for C16-C18 unsaturated fatty acids. The protein is Long-chain-fatty-acid--CoA ligase 5 of Mus musculus (Mouse).